The chain runs to 211 residues: MARYTGPVCKLSRREGVDLMLKSGNSGRKVLERRGSQPPGQHGASVRRRQLSDYGVQLREKQKVRRIYGVLERQFRRYYGIATRTTGQTGAVLLQILERRLDNVVFRLGYAVTRAQARQLVNHGHITVNGRKTDIPSALVEVGDVIGVRAESRKRDYFKDLEETKQLNRVSPPSWLSLDAGKMEGVVQTFPSREELDMSINEQLIVEFYSR.

The interval 27 to 48 (GRKVLERRGSQPPGQHGASVRR) is disordered. The region spanning 99–162 (RRLDNVVFRL…RKRDYFKDLE (64 aa)) is the S4 RNA-binding domain.

This sequence belongs to the universal ribosomal protein uS4 family. As to quaternary structure, part of the 30S ribosomal subunit. Contacts protein S5. The interaction surface between S4 and S5 is involved in control of translational fidelity.

Functionally, one of the primary rRNA binding proteins, it binds directly to 16S rRNA where it nucleates assembly of the body of the 30S subunit. In terms of biological role, with S5 and S12 plays an important role in translational accuracy. In Herpetosiphon aurantiacus (strain ATCC 23779 / DSM 785 / 114-95), this protein is Small ribosomal subunit protein uS4.